The sequence spans 1544 residues: Arf-GAP with Rho-GAP domain, ANK repeat and PH domain-containing protein 3 (1544 aa).

An SAM domain is found at 4–68 (PQDLDIAVWL…LRLLQTGTEE (65 aa)). 2 disordered regions span residues 64–147 (TGTE…EQSS) and 167–194 (GRAQ…PTTG). Pro residues-rich tracts occupy residues 82–97 (SPSP…PVPK) and 130–139 (EPSPRPPPLP). PH domains lie at 287-379 (TPLL…SCLK) and 394-483 (RPLR…EAVT). One can recognise an Arf-GAP domain in the interval 480–611 (EAVTETLSDY…LFRKPHPQYP (132 aa)). Residues 504-527 (CADCGSSRPDWAAVNLGVVICKQC) form a C4-type zinc finger. One can recognise a Rho-GAP domain in the interval 907 to 1088 (TGLQEQQMSR…ELIDGYISVF (182 aa)). The Ras-associating domain maps to 1117-1210 (GDLIMEVYIE…ASLLLKKVPL (94 aa)). The PH 3 domain maps to 1223–1325 (ESPRVGLLRC…WTTSILKAQH (103 aa)). T1348 carries the phosphothreonine modification. Phosphotyrosine occurs at positions 1403 and 1408. The disordered stretch occupies residues 1422–1544 (STSFSTTREW…SSPPSSQPLT (123 aa)). Positions 1438 to 1457 (PLTSQKSLDQPFLSKSSTLG) are enriched in polar residues. S1444 and S1480 each carry phosphoserine. 2 stretches are compositionally biased toward low complexity: residues 1482–1492 (EEQLLQELSSL) and 1502–1527 (GLGS…TPGF).

In terms of assembly, interacts (via SAM domain) with INPPL1/SHIP2. In terms of processing, tyrosine phosphorylated at a low basal level. PDGF treatment stimulates phosphorylation. Tyrosine phosphorylation is increased in cells that are in the process of becoming attached to a substrate and that start spreading and flattening.

The protein localises to the cytoplasm. The protein resides in the cytoskeleton. It localises to the cell membrane. It is found in the cell projection. Its subcellular location is the lamellipodium. The protein localises to the ruffle. Functionally, phosphatidylinositol 3,4,5-trisphosphate-dependent GTPase-activating protein that modulates actin cytoskeleton remodeling by regulating ARF and RHO family members. Is activated by phosphatidylinositol 3,4,5-trisphosphate (PtdIns(3,4,5)P3) binding. Can be activated by phosphatidylinositol 3,4-bisphosphate (PtdIns(3,4,5)P2) binding, albeit with lower efficiency. Acts on ARF6, RAC1, RHOA and CDC42. Plays a role in the internalization of anthrax toxin. The polypeptide is Arf-GAP with Rho-GAP domain, ANK repeat and PH domain-containing protein 3 (ARAP3) (Homo sapiens (Human)).